A 451-amino-acid chain; its full sequence is Tubulin alpha-2 chain (451 aa).

Gln11 provides a ligand contact to GTP. An N6-acetyllysine modification is found at Lys40. GTP contacts are provided by Glu71, Ser140, Gly144, Thr145, Thr179, Asn206, and Asn228. Glu71 provides a ligand contact to Mg(2+). Residue Glu254 is part of the active site. The interval 432-451 is disordered; sequence YEEVGIDTADGEDDEEANDY.

The protein belongs to the tubulin family. In terms of assembly, dimer of alpha and beta chains. A typical microtubule is a hollow water-filled tube with an outer diameter of 25 nm and an inner diameter of 15 nM. Alpha-beta heterodimers associate head-to-tail to form protofilaments running lengthwise along the microtubule wall with the beta-tubulin subunit facing the microtubule plus end conferring a structural polarity. Microtubules usually have 13 protofilaments but different protofilament numbers can be found in some organisms and specialized cells. Mg(2+) is required as a cofactor. In terms of processing, undergoes a tyrosination/detyrosination cycle, the cyclic removal and re-addition of a C-terminal tyrosine residue by the enzymes tubulin tyrosine carboxypeptidase (TTCP) and tubulin tyrosine ligase (TTL), respectively. Acetylation of alpha chains at Lys-40 stabilizes microtubules and affects affinity and processivity of microtubule motors. This modification has a role in multiple cellular functions, ranging from cell motility, cell cycle progression or cell differentiation to intracellular trafficking and signaling.

It localises to the cytoplasm. The protein resides in the cytoskeleton. It carries out the reaction GTP + H2O = GDP + phosphate + H(+). Its function is as follows. Tubulin is the major constituent of microtubules, a cylinder consisting of laterally associated linear protofilaments composed of alpha- and beta-tubulin heterodimers. Microtubules grow by the addition of GTP-tubulin dimers to the microtubule end, where a stabilizing cap forms. Below the cap, tubulin dimers are in GDP-bound state, owing to GTPase activity of alpha-tubulin. The polypeptide is Tubulin alpha-2 chain (Homarus americanus (American lobster)).